The chain runs to 85 residues: Beta-insect depressant toxin Lqh-dprIT3c (85 aa).

The first 21 residues, 1 to 21 (MKLLLLLTISASMLIEGLVNA), serve as a signal peptide directing secretion. The LCN-type CS-alpha/beta domain maps to 22 to 82 (DGYIRGGDGC…EWDYETNTCG (61 aa)). 4 disulfides stabilise this stretch: C31/C81, C35/C56, C42/C63, and C46/C65. Position 82 is a glycine amide (G82).

The protein belongs to the long (4 C-C) scorpion toxin superfamily. Sodium channel inhibitor family. Beta subfamily. As to expression, expressed by the venom gland.

It is found in the secreted. Its function is as follows. Depressant insect beta-toxins cause a transient contraction paralysis followed by a slow flaccid paralysis. They bind voltage-independently at site-4 of sodium channels (Nav) and block action potentials, primarily by depolarizing the axonal membrane and suppressing the sodium current. This depressant toxin is active only on insects. It is found in a relatively small amount in the venom, and its activity on insects is 10-fold higher compared to other known depressant toxins. This Leiurus hebraeus (Hebrew deathstalker scorpion) protein is Beta-insect depressant toxin Lqh-dprIT3c.